The chain runs to 264 residues: Phosphonoacetaldehyde hydrolase (264 aa).

Asp-9 (nucleophile) is an active-site residue. Asp-9 and Ala-11 together coordinate Mg(2+). Lys-50 acts as the Schiff-base intermediate with substrate in catalysis. Mg(2+) is bound at residue Asp-183.

This sequence belongs to the HAD-like hydrolase superfamily. PhnX family. In terms of assembly, homodimer. It depends on Mg(2+) as a cofactor.

It carries out the reaction phosphonoacetaldehyde + H2O = acetaldehyde + phosphate + H(+). In terms of biological role, involved in phosphonate degradation. The protein is Phosphonoacetaldehyde hydrolase of Bacillus cereus (strain G9842).